The following is a 384-amino-acid chain: Transcription factor iacI (384 aa).

The protein localises to the nucleus. In terms of biological role, transcription factor; part of the gene cluster that mediates the biosynthesis of iso-A82775C, a enylepoxycyclohexane and biosynthetic precursor of the chloropestolide anticancer natural products. The protein is Transcription factor iacI of Pestalotiopsis fici (strain W106-1 / CGMCC3.15140).